The primary structure comprises 283 residues: NAD kinase (283 aa).

Asp68 acts as the Proton acceptor in catalysis. Residues 68–69, 142–143, Arg153, Asp172, 183–188, and Gln242 each bind NAD(+); these read DG, ND, and TAYSLS.

This sequence belongs to the NAD kinase family. It depends on a divalent metal cation as a cofactor.

Its subcellular location is the cytoplasm. It carries out the reaction NAD(+) + ATP = ADP + NADP(+) + H(+). Its function is as follows. Involved in the regulation of the intracellular balance of NAD and NADP, and is a key enzyme in the biosynthesis of NADP. Catalyzes specifically the phosphorylation on 2'-hydroxyl of the adenosine moiety of NAD to yield NADP. This chain is NAD kinase, found in Thermoanaerobacter pseudethanolicus (strain ATCC 33223 / 39E) (Clostridium thermohydrosulfuricum).